A 119-amino-acid chain; its full sequence is Acidic phospholipase A2 DE-II (119 aa).

7 disulfide bridges follow: C11–C72, C26–C118, C28–C44, C43–C99, C50–C92, C60–C85, and C79–C90. Y27, G29, and G31 together coordinate Ca(2+). H47 is a catalytic residue. Position 48 (D48) interacts with Ca(2+). The active site involves D93.

Belongs to the phospholipase A2 family. Group I subfamily. D49 sub-subfamily. Ca(2+) serves as cofactor. As to expression, expressed by the venom gland.

The protein resides in the secreted. It catalyses the reaction a 1,2-diacyl-sn-glycero-3-phosphocholine + H2O = a 1-acyl-sn-glycero-3-phosphocholine + a fatty acid + H(+). Functionally, PLA2 catalyzes the calcium-dependent hydrolysis of the 2-acyl groups in 3-sn-phosphoglycerides. The sequence is that of Acidic phospholipase A2 DE-II from Naja melanoleuca (Forest cobra).